The following is a 319-amino-acid chain: ATP-dependent 6-phosphofructokinase (319 aa).

Glycine 11 provides a ligand contact to ATP. ADP is bound at residue 21 to 25 (RAVVR). Residues 72–73 (RC) and 102–105 (GDGS) contribute to the ATP site. A Mg(2+)-binding site is contributed by aspartate 103. Substrate is bound at residue 125–127 (TID). Residue aspartate 127 is the Proton acceptor of the active site. Residue arginine 154 coordinates ADP. Residues arginine 162 and 169–171 (MGR) each bind substrate. ADP contacts are provided by residues 185 to 187 (GAE), arginine 211, and 213 to 215 (KKH). Substrate contacts are provided by residues glutamate 222, arginine 243, and 249–252 (HVQR).

It belongs to the phosphofructokinase type A (PFKA) family. ATP-dependent PFK group I subfamily. Prokaryotic clade 'B1' sub-subfamily. Homotetramer. The cofactor is Mg(2+).

It is found in the cytoplasm. It carries out the reaction beta-D-fructose 6-phosphate + ATP = beta-D-fructose 1,6-bisphosphate + ADP + H(+). It participates in carbohydrate degradation; glycolysis; D-glyceraldehyde 3-phosphate and glycerone phosphate from D-glucose: step 3/4. Allosterically activated by ADP and other diphosphonucleosides, and allosterically inhibited by phosphoenolpyruvate. In terms of biological role, catalyzes the phosphorylation of D-fructose 6-phosphate to fructose 1,6-bisphosphate by ATP, the first committing step of glycolysis. This Geobacillus sp. (strain WCH70) protein is ATP-dependent 6-phosphofructokinase.